Here is a 250-residue protein sequence, read N- to C-terminus: MKTTRTEAIILNTRDHGESDRLVGLYTRSGGRLQGIAKGARRSRKRFANTLEPCSLVELQFREKGTLVWLESCKLLEPFLSLRTELIRWGIAALISEIVIEMVPEGDPQPELFELLKETLRQLCEDKDSLNVALLFIFRFQDKMGYLPALENCGICGRSLRSATKWCWQVDRGLLACPDHPVERVRALELDLGTLLLIRQCRSLSLDRIWRLRFLHDTKVQLFYGLLDWVRGHIRKELKSLKLLQQAHST.

This sequence belongs to the RecO family.

In terms of biological role, involved in DNA repair and RecF pathway recombination. The sequence is that of DNA repair protein RecO from Syntrophobacter fumaroxidans (strain DSM 10017 / MPOB).